The chain runs to 466 residues: Catalase ifgD (466 aa).

The disordered stretch occupies residues 1-22; that stretch reads MAPNYAKKCPVMGKAPSSGHSS. H48 is a catalytic residue. Y337 is a heme binding site.

It belongs to the catalase family. The cofactor is heme.

It functions in the pathway alkaloid biosynthesis; ergot alkaloid biosynthesis. Functionally, catalase; part of the gene cluster that mediates the biosynthesis of isofumigaclavines, fungal ergot alkaloids. The tryptophan dimethylallyltransferase ifgA catalyzes the first step of ergot alkaloid biosynthesis by condensing dimethylallyl diphosphate (DMAP) and tryptophan to form 4-dimethylallyl-L-tryptophan. The second step is catalyzed by the methyltransferase ifgB that methylates 4-dimethylallyl-L-tryptophan in the presence of S-adenosyl-L-methionine, resulting in the formation of N-methyl-dimethylallyl-L-tryptophan. The catalase ifgD and the FAD-dependent oxidoreductase ifgC then transform N-methyl-dimethylallyl-L-tryptophan to chanoclavine-I which is further oxidized by ifgE in the presence of NAD(+), resulting in the formation of chanoclavine-I aldehyde. The chanoclavine-I aldehyde reductases ifgG and/or fgaOx3 reduce chanoclavine-I aldehyde to dihydrochanoclavine-I aldehyde that spontaneously dehydrates to form 6,8-dimethyl-6,7-didehydroergoline. The festuclavine dehydrogenases ifgF1 and/or ifgF2 then catalyze the reduction of 6,8-dimethyl-6,7-didehydroergoline to form festuclavine. Hydrolysis of festuclavine by a yet undetermined cytochrome P450 monooxygenase (called ifgH) then leads to the formation of isofumigaclavine B which is in turn acetylated by ifgI to isofumigaclavine A. Penicillium roqueforti has interestingly at least two sets of genes for the consumption of chanoclavine-I aldehyde on three different loci, the OYEs ifgG/fgaOx3 and the festuclavine synthase homologs ifgF1/ifgF2. The reason for the duplication of these genes is unclear, probably to ensure the conversion of chanoclavine-I aldehyde by differential gene expression under various environmental conditions. The chain is Catalase ifgD from Penicillium roqueforti (strain FM164).